The sequence spans 100 residues: NADH-quinone oxidoreductase subunit K (100 aa).

A run of 3 helical transmembrane segments spans residues 4–24 (LQHGLILAAILFVLGLTGLLI), 28–48 (LLFMLISLEIMINAAALAFVV), and 60–80 (VMYILAITLAAAEASIGLALL).

The protein belongs to the complex I subunit 4L family. NDH-1 is composed of 13 different subunits. Subunits NuoA, H, J, K, L, M, N constitute the membrane sector of the complex.

The protein resides in the cell inner membrane. It catalyses the reaction a quinone + NADH + 5 H(+)(in) = a quinol + NAD(+) + 4 H(+)(out). In terms of biological role, NDH-1 shuttles electrons from NADH, via FMN and iron-sulfur (Fe-S) centers, to quinones in the respiratory chain. The immediate electron acceptor for the enzyme in this species is believed to be ubiquinone. Couples the redox reaction to proton translocation (for every two electrons transferred, four hydrogen ions are translocated across the cytoplasmic membrane), and thus conserves the redox energy in a proton gradient. The protein is NADH-quinone oxidoreductase subunit K of Pectobacterium carotovorum subsp. carotovorum (strain PC1).